A 279-amino-acid chain; its full sequence is NADPH-dependent 7-cyano-7-deazaguanine reductase (279 aa).

Ile86 to Ser88 provides a ligand contact to substrate. Position 88-89 (Ser88–Lys89) interacts with NADPH. Catalysis depends on Cys187, which acts as the Thioimide intermediate. Asp194 acts as the Proton donor in catalysis. Residue His226–Glu227 participates in substrate binding. Arg255–Gly256 provides a ligand contact to NADPH.

It belongs to the GTP cyclohydrolase I family. QueF type 2 subfamily. In terms of assembly, homodimer.

It localises to the cytoplasm. The catalysed reaction is 7-aminomethyl-7-carbaguanine + 2 NADP(+) = 7-cyano-7-deazaguanine + 2 NADPH + 3 H(+). The protein operates within tRNA modification; tRNA-queuosine biosynthesis. Catalyzes the NADPH-dependent reduction of 7-cyano-7-deazaguanine (preQ0) to 7-aminomethyl-7-deazaguanine (preQ1). This is NADPH-dependent 7-cyano-7-deazaguanine reductase from Haemophilus influenzae (strain PittEE).